Reading from the N-terminus, the 263-residue chain is Endonuclease 8 (263 aa).

Pro-2 functions as the Schiff-base intermediate with DNA in the catalytic mechanism. The active-site Proton donor is the Glu-3. Lys-53 serves as the catalytic Proton donor; for beta-elimination activity. DNA-binding residues include Gln-70, Arg-125, and Asn-169. The FPG-type zinc-finger motif lies at 229–263 (KVFHRDGEVCERCGGIIEKTTLSSRPFYWCPHCQK). Arg-253 acts as the Proton donor; for delta-elimination activity in catalysis.

This sequence belongs to the FPG family. Zn(2+) is required as a cofactor.

It carries out the reaction 2'-deoxyribonucleotide-(2'-deoxyribose 5'-phosphate)-2'-deoxyribonucleotide-DNA = a 3'-end 2'-deoxyribonucleotide-(2,3-dehydro-2,3-deoxyribose 5'-phosphate)-DNA + a 5'-end 5'-phospho-2'-deoxyribonucleoside-DNA + H(+). In terms of biological role, involved in base excision repair of DNA damaged by oxidation or by mutagenic agents. Acts as a DNA glycosylase that recognizes and removes damaged bases. Has a preference for oxidized pyrimidines, such as thymine glycol, 5,6-dihydrouracil and 5,6-dihydrothymine. Has AP (apurinic/apyrimidinic) lyase activity and introduces nicks in the DNA strand. Cleaves the DNA backbone by beta-delta elimination to generate a single-strand break at the site of the removed base with both 3'- and 5'-phosphates. In Salmonella newport (strain SL254), this protein is Endonuclease 8.